The sequence spans 161 residues: Insulin-like growth factor 1, juvenile form (161 aa).

Residues 45 to 73 (GPETLCGAELVDTLQFVCGDRGFYFSKPT) form a b region. Cystine bridges form between cysteine 50-cysteine 92, cysteine 62-cysteine 105, and cysteine 91-cysteine 96. Residues 74 to 85 (GYGPSSRRSHNR) form a c region. Residues 86-106 (GIVDECCFQSCELRRLEMYCA) form an a region. Residues 107-114 (PVKPGKTP) form a d region. Positions 111 to 161 (GKTPRSVRAQRHTDSPRTAKKPLPGQSHSSYKEVHQKNSSRGNTGGRNYRI) are disordered. A propeptide spans 115-161 (RSVRAQRHTDSPRTAKKPLPGQSHSSYKEVHQKNSSRGNTGGRNYRI) (e peptide).

Belongs to the insulin family.

The protein localises to the secreted. Its function is as follows. The insulin-like growth factors, isolated from plasma, are structurally and functionally related to insulin but have a much higher growth-promoting activity. Acts as a ligand for IGF1R. Binds to the alpha subunit of IGF1R, leading to the activation of the intrinsic tyrosine kinase activity which autophosphorylates tyrosine residues in the beta subunit thus initiatiating a cascade of down-stream signaling events leading to activation of the PI3K-AKT/PKB and the Ras-MAPK pathways. Binds to integrins. Its binding to integrins and subsequent ternary complex formation with integrins and IGFR1 are essential for IGF1 signaling. This chain is Insulin-like growth factor 1, juvenile form, found in Cyprinus carpio (Common carp).